The chain runs to 78 residues: Large ribosomal subunit protein bL28 (78 aa).

The protein belongs to the bacterial ribosomal protein bL28 family.

In Escherichia coli O139:H28 (strain E24377A / ETEC), this protein is Large ribosomal subunit protein bL28.